Here is a 138-residue protein sequence, read N- to C-terminus: Large ribosomal subunit protein uL16 (138 aa).

The span at 1 to 19 shows a compositional bias: basic residues; it reads MLIPRRVKHRKQHHPKRSG. Residues 1–24 form a disordered region; that stretch reads MLIPRRVKHRKQHHPKRSGAAKGG.

Belongs to the universal ribosomal protein uL16 family. As to quaternary structure, part of the 50S ribosomal subunit.

Its function is as follows. Binds 23S rRNA and is also seen to make contacts with the A and possibly P site tRNAs. This is Large ribosomal subunit protein uL16 from Micrococcus luteus (strain ATCC 4698 / DSM 20030 / JCM 1464 / CCM 169 / CCUG 5858 / IAM 1056 / NBRC 3333 / NCIMB 9278 / NCTC 2665 / VKM Ac-2230) (Micrococcus lysodeikticus).